The sequence spans 58 residues: Large ribosomal subunit protein bL32 (58 aa).

Disordered regions lie at residues 1–22 (MAVPKKKTSNAKRDQRKAHWKR) and 39–58 (LSGRSNSFVYPQDEEEDDEE).

This sequence belongs to the bacterial ribosomal protein bL32 family.

The sequence is that of Large ribosomal subunit protein bL32 from Crocosphaera subtropica (strain ATCC 51142 / BH68) (Cyanothece sp. (strain ATCC 51142)).